Reading from the N-terminus, the 86-residue chain is Co-chaperonin GroES (86 aa).

The protein belongs to the GroES chaperonin family. As to quaternary structure, heptamer of 7 subunits arranged in a ring. Interacts with the chaperonin GroEL.

The protein localises to the cytoplasm. In terms of biological role, together with the chaperonin GroEL, plays an essential role in assisting protein folding. The GroEL-GroES system forms a nano-cage that allows encapsulation of the non-native substrate proteins and provides a physical environment optimized to promote and accelerate protein folding. GroES binds to the apical surface of the GroEL ring, thereby capping the opening of the GroEL channel. In Campylobacter jejuni subsp. doylei (strain ATCC BAA-1458 / RM4099 / 269.97), this protein is Co-chaperonin GroES.